A 78-amino-acid chain; its full sequence is Acyl carrier protein (78 aa).

A Carrier domain is found at 1–77 (MALIDEIKDV…DAAKYIEEHK (77 aa)). An O-(pantetheine 4'-phosphoryl)serine modification is found at Ser-37.

It belongs to the acyl carrier protein (ACP) family. In terms of processing, 4'-phosphopantetheine is transferred from CoA to a specific serine of apo-ACP by AcpS. This modification is essential for activity because fatty acids are bound in thioester linkage to the sulfhydryl of the prosthetic group.

The protein localises to the secreted. The protein operates within lipid metabolism; fatty acid biosynthesis. In terms of biological role, carrier of the growing fatty acid chain in fatty acid biosynthesis. Has hemolytic activity forming pores approximately 1 nm in diameter into erythrocytes. Is able to induce murine colonic lesions and to disrupt the integrity of epithelial cell monolayers. This Brachyspira hyodysenteriae (Treponema hyodysenteriae) protein is Acyl carrier protein (acpP).